Reading from the N-terminus, the 38-residue chain is Large ribosomal subunit protein bL36 (38 aa).

It belongs to the bacterial ribosomal protein bL36 family.

The polypeptide is Large ribosomal subunit protein bL36 (Roseiflexus sp. (strain RS-1)).